Consider the following 289-residue polypeptide: Urease accessory protein UreD (289 aa).

Belongs to the UreD family. UreD, UreF and UreG form a complex that acts as a GTP-hydrolysis-dependent molecular chaperone, activating the urease apoprotein by helping to assemble the nickel containing metallocenter of UreC. The UreE protein probably delivers the nickel.

It is found in the cytoplasm. Functionally, required for maturation of urease via the functional incorporation of the urease nickel metallocenter. This chain is Urease accessory protein UreD, found in Cupriavidus necator (strain ATCC 17699 / DSM 428 / KCTC 22496 / NCIMB 10442 / H16 / Stanier 337) (Ralstonia eutropha).